We begin with the raw amino-acid sequence, 248 residues long: 3-deoxy-manno-octulosonate cytidylyltransferase (248 aa).

Belongs to the KdsB family.

The protein localises to the cytoplasm. The enzyme catalyses 3-deoxy-alpha-D-manno-oct-2-ulosonate + CTP = CMP-3-deoxy-beta-D-manno-octulosonate + diphosphate. Its pathway is nucleotide-sugar biosynthesis; CMP-3-deoxy-D-manno-octulosonate biosynthesis; CMP-3-deoxy-D-manno-octulosonate from 3-deoxy-D-manno-octulosonate and CTP: step 1/1. The protein operates within bacterial outer membrane biogenesis; lipopolysaccharide biosynthesis. In terms of biological role, activates KDO (a required 8-carbon sugar) for incorporation into bacterial lipopolysaccharide in Gram-negative bacteria. The protein is 3-deoxy-manno-octulosonate cytidylyltransferase of Cronobacter sakazakii (strain ATCC BAA-894) (Enterobacter sakazakii).